Here is a 213-residue protein sequence, read N- to C-terminus: Putative manganese efflux pump MntP (213 aa).

Helical transmembrane passes span 6–26, 34–54, 58–78, 107–127, 132–152, 153–173, and 192–212; these read LGVLAVGLGADAFSMALGIGM, AFMLGLVVALFHIFMPWFGIL, ALGLVVGRLASFIGAAVLFFL, GSGGGAIVGAGAIVGGRLFAP, LVVIGAAVSMDALSVGFSLGT, VGAQLLPTVLTFGVVAGIMTV, and LAGGLILLGIGIKLLLGSASP.

This sequence belongs to the MntP (TC 9.B.29) family.

It is found in the cell membrane. Probably functions as a manganese efflux pump. The protein is Putative manganese efflux pump MntP of Heliobacterium modesticaldum (strain ATCC 51547 / Ice1).